The following is a 550-amino-acid chain: Solute carrier family 22 member 6 (550 aa).

At 1–9 (MAFNDLLQQ) the chain is on the cytoplasmic side. The chain crosses the membrane as a helical span at residues 10 to 30 (VGGVGRFQQIQVTLVVLPLLL). Residues 31–135 (MASHNTVQNF…LVCSHRALRQ (105 aa)) are Extracellular-facing. N-linked (GlcNAc...) asparagine glycosylation is found at Asn56, Asn92, and Asn113. A helical transmembrane segment spans residues 136–156 (LAQSLYMVGVLLGAMVFGYLA). The Cytoplasmic segment spans residues 157 to 164 (DRLGRRKV). A helical membrane pass occupies residues 165 to 187 (LILNYLQTAVSGTCAAFAPNFPI). Topologically, residues 188–190 (YCA) are extracellular. A helical membrane pass occupies residues 191 to 213 (FRLLSGMSLAGIALNCMTLNVEW). The Cytoplasmic portion of the chain corresponds to 214 to 224 (MPIHTRACVGT). The helical transmembrane segment at 225–245 (LIGYVYSLGQFLLAGVAYAVP) threads the bilayer. Residues 246–248 (HWR) are Extracellular-facing. A helical membrane pass occupies residues 249–269 (HLQLLISVPFFAFFIYSWFFI). At 270-337 (ESARWHSSSG…ELLRCPTLRH (68 aa)) the chain is on the cytoplasmic side. A helical transmembrane segment spans residues 338–358 (LFLCLSMLWFATSFAYYGLVM). Over 359–368 (DLQGFGVSIY) the chain is Extracellular. Residues 369–389 (LIQVIFGAVDLPAKLVGFLVI) traverse the membrane as a helical segment. The Cytoplasmic portion of the chain corresponds to 390–395 (NSLGRR). A helical membrane pass occupies residues 396 to 416 (PAQMAALLLAGICILLNGVVP). Residues 417 to 425 (QDQSVIRTS) are Extracellular-facing. Residues 426–446 (LAVLGKGCLAASFNCIFLYTG) form a helical membrane-spanning segment. The Cytoplasmic portion of the chain corresponds to 447 to 456 (ELYPTMIRQT). A helical membrane pass occupies residues 457 to 477 (GLGMGSTMARVGSIVSPLVSM). At 478–484 (TTELYPS) the chain is on the extracellular side. Residues 485–505 (VPLFIYGAVPVAASAVTVLLP) traverse the membrane as a helical segment. Over 506-550 (ETLGQPLPDTVQDLESRKGKQTPQQQEHQKYMVPLQASAQEKNGL) the chain is Cytoplasmic. The interval 513–550 (PDTVQDLESRKGKQTPQQQEHQKYMVPLQASAQEKNGL) is disordered.

This sequence belongs to the major facilitator (TC 2.A.1) superfamily. Organic cation transporter (TC 2.A.1.19) family. Post-translationally, glycosylated. Glycosylation is necessary for proper targeting of the transporter to the plasma membrane. As to expression, expressed in kidney; in the basolateral membrane of the proximal tubule.

The protein resides in the basolateral cell membrane. Its subcellular location is the basal cell membrane. It catalyses the reaction (6R)-L-erythro-5,6,7,8-tetrahydrobiopterin(out) + a dicarboxylate(in) = (6R)-L-erythro-5,6,7,8-tetrahydrobiopterin(in) + a dicarboxylate(out). The catalysed reaction is L-erythro-7,8-dihydrobiopterin(out) + a dicarboxylate(in) = L-erythro-7,8-dihydrobiopterin(in) + a dicarboxylate(out). It carries out the reaction L-sepiapterin(out) + a dicarboxylate(in) = L-sepiapterin(in) + a dicarboxylate(out). The enzyme catalyses prostaglandin F2alpha(out) + a dicarboxylate(in) = prostaglandin F2alpha(in) + a dicarboxylate(out). It catalyses the reaction prostaglandin E2(out) + a dicarboxylate(in) = prostaglandin E2(in) + a dicarboxylate(out). The catalysed reaction is 3',5'-cyclic AMP(out) + a dicarboxylate(in) = 3',5'-cyclic AMP(in) + a dicarboxylate(out). It carries out the reaction 3',5'-cyclic GMP(out) + a dicarboxylate(in) = 3',5'-cyclic GMP(in) + a dicarboxylate(out). The enzyme catalyses urate(out) + a dicarboxylate(in) = urate(in) + a dicarboxylate(out). It catalyses the reaction kynurenate(out) + glutarate(in) = kynurenate(in) + glutarate(out). The catalysed reaction is (indol-3-yl)acetate(out) + a dicarboxylate(in) = (indol-3-yl)acetate(in) + a dicarboxylate(out). It carries out the reaction indoxyl sulfate(out) + a dicarboxylate(in) = indoxyl sulfate(in) + a dicarboxylate(out). The enzyme catalyses N-benzoylglycine(out) + a dicarboxylate(in) = N-benzoylglycine(in) + a dicarboxylate(out). It catalyses the reaction 3-carboxy-4-methyl-5-propyl-2-furanpropanoate(out) + a dicarboxylate(in) = 3-carboxy-4-methyl-5-propyl-2-furanpropanoate(in) + a dicarboxylate(out). Its function is as follows. Secondary active transporter that functions as a Na(+)-independent organic anion (OA)/dicarboxylate antiporter where the uptake of one molecule of OA into the cell is coupled with an efflux of one molecule of intracellular dicarboxylate such as 2-oxoglutarate or glutarate. Mediates the uptake of OA across the basolateral side of proximal tubule epithelial cells, thereby contributing to the renal elimination of endogenous OA from the systemic circulation into the urine. Functions as a biopterin transporters involved in the uptake and the secretion of coenzymes tetrahydrobiopterin (BH4), dihydrobiopterin (BH2) and sepiapterin to urine, thereby determining baseline levels of blood biopterins. Transports prostaglandin E2 (PGE2) and prostaglandin F2-alpha (PGF2-alpha) and may contribute to their renal excretion. Also mediates the uptake of cyclic nucleotides such as cAMP and cGMP. Involved in the transport of neuroactive tryptophan metabolites kynurenate (KYNA) and xanthurenate (XA) and may contribute to their secretion from the brain. May transport glutamate. Also involved in the disposition of uremic toxins and potentially toxic xenobiotics by the renal organic anion secretory pathway, helping reduce their undesired toxicological effects on the body. Uremic toxins include the indoxyl sulfate (IS), hippurate/N-benzoylglycine (HA), indole acetate (IA), 3-carboxy-4- methyl-5-propyl-2-furanpropionate (CMPF) and urate. Xenobiotics include the mycotoxin ochratoxin (OTA). May also contribute to the transport of organic compounds in testes across the blood-testis-barrier. This Macaca fascicularis (Crab-eating macaque) protein is Solute carrier family 22 member 6.